We begin with the raw amino-acid sequence, 581 residues long: Leucine-rich repeat-containing protein 47 (581 aa).

LRR repeat units follow at residues 78 to 97 (QLHS…SPEL), 102 to 123 (ALRV…EGLG), 132 to 154 (QLQS…ARCA), 156 to 177 (RLQS…LFRP), 182 to 204 (LLSE…AHLA), 205 to 227 (SLKT…ADCP), and 228 to 248 (KLKE…EKMV). The interval 262–301 (AGGRGGRSKGRQEASEKEDRKKRRERKQHRESGEGEEEVA) is disordered. A compositionally biased stretch (basic and acidic residues) spans 271–280 (GRQEASEKED). Ser-314, Ser-430, and Ser-519 each carry phosphoserine. A coiled-coil region spans residues 401–436 (LGRKEAKAKELVRQLQLEAEEQRKQKKRQSVSGLHR).

The sequence is that of Leucine-rich repeat-containing protein 47 (Lrrc47) from Mus musculus (Mouse).